The following is a 145-amino-acid chain: Flagellar assembly factor FliW (145 aa).

Belongs to the FliW family. In terms of assembly, interacts with translational regulator CsrA and flagellin(s).

The protein resides in the cytoplasm. Functionally, acts as an anti-CsrA protein, binds CsrA and prevents it from repressing translation of its target genes, one of which is flagellin. Binds to flagellin and participates in the assembly of the flagellum. The protein is Flagellar assembly factor FliW of Thermosipho africanus (strain TCF52B).